Consider the following 262-residue polypeptide: Nodulation protein J (262 aa).

In terms of domain architecture, ABC transmembrane type-2 spans 33 to 259 (ASLLGHLAEP…FLSTALLRRR (227 aa)). Transmembrane regions (helical) follow at residues 35-55 (LLGHLAEPLIYLFGLGAGLGV), 60-80 (VGGVSYTAFLAAGMVATSAMT), 125-145 (AALAGAGIGVVAAALGYTQWL), 148-168 (LYALPVIALTGLAFASLGMVV), 177-197 (YFIFYQTLVITPILFLSGAVF), and 231-251 (VVDVCQHVGALCIYIVIPFFL).

Belongs to the ABC-2 integral membrane protein family. Lipooligosaccharide exporter (TC 3.A.1.102) subfamily. In terms of assembly, the complex is composed of two ATP-binding proteins (NodI) and two transmembrane proteins (NodJ).

Its subcellular location is the cell inner membrane. Functionally, part of the ABC transporter complex NodIJ involved in the export of the nodulation factors (Nod factors), the bacterial signal molecules that induce symbiosis and subsequent nodulation induction. Nod factors are LCO (lipo-chitin oligosaccharide), a modified beta-1,4-linked N-acetylglucosamine oligosaccharide. This subunit encodes the transporter. The protein is Nodulation protein J (nodJ) of Rhizobium leguminosarum bv. trifolii.